The sequence spans 407 residues: MTEASENASATGGVAVVIVAAGRGARAGQANGPKQYQNIGGRAVIAHTLEIFLAHPRTDRIVVAIHADDHELFRQAAGSQAERVTAIIGGPTRQESVRLGLLALKEHAPGQVLIHDAVRPFVDADLIDRTISAIGENEGALPALPVADTLKRESAAGVVAETVSRSGLHAAQTPQGFPYGPILAAHDKAFQLGRLDFTDDAAIAEWAHIPVKLVPGSPDNVKLTWARDIAMAHQRLSSERTHFPDIRTGNGYDVHAFEPGDHVTLCGVAIPHDKKLSGHSDADVGLHALTDALLATCGAGDIGTHFPPSDPQWKGAASRIFVEHAAKVVRQRGGRIANADITLICEAPRVGPHREAMTAALSRMLGISADRISIKATTNEKLGFVGREEGIAAIATASVVFPGEVPE.

The 2-C-methyl-D-erythritol 4-phosphate cytidylyltransferase stretch occupies residues 1-246 (MTEASENASA…SSERTHFPDI (246 aa)). The segment at 247–407 (RTGNGYDVHA…SVVFPGEVPE (161 aa)) is 2-C-methyl-D-erythritol 2,4-cyclodiphosphate synthase. A divalent metal cation is bound by residues Asp253 and His255. 4-CDP-2-C-methyl-D-erythritol 2-phosphate contacts are provided by residues 253–255 (DVH) and 279–280 (HS). His287 is a binding site for a divalent metal cation. 4-CDP-2-C-methyl-D-erythritol 2-phosphate-binding positions include 301–303 (DIG), 377–380 (TTNE), Phe384, and Arg387.

In the N-terminal section; belongs to the IspD/TarI cytidylyltransferase family. IspD subfamily. It in the C-terminal section; belongs to the IspF family. A divalent metal cation serves as cofactor.

The catalysed reaction is 2-C-methyl-D-erythritol 4-phosphate + CTP + H(+) = 4-CDP-2-C-methyl-D-erythritol + diphosphate. It catalyses the reaction 4-CDP-2-C-methyl-D-erythritol 2-phosphate = 2-C-methyl-D-erythritol 2,4-cyclic diphosphate + CMP. It participates in isoprenoid biosynthesis; isopentenyl diphosphate biosynthesis via DXP pathway; isopentenyl diphosphate from 1-deoxy-D-xylulose 5-phosphate: step 2/6. Its pathway is isoprenoid biosynthesis; isopentenyl diphosphate biosynthesis via DXP pathway; isopentenyl diphosphate from 1-deoxy-D-xylulose 5-phosphate: step 4/6. Bifunctional enzyme that catalyzes the formation of 4-diphosphocytidyl-2-C-methyl-D-erythritol from CTP and 2-C-methyl-D-erythritol 4-phosphate (MEP) (IspD), and catalyzes the conversion of 4-diphosphocytidyl-2-C-methyl-D-erythritol 2-phosphate (CDP-ME2P) to 2-C-methyl-D-erythritol 2,4-cyclodiphosphate (ME-CPP) with a corresponding release of cytidine 5-monophosphate (CMP) (IspF). In Mesorhizobium japonicum (strain LMG 29417 / CECT 9101 / MAFF 303099) (Mesorhizobium loti (strain MAFF 303099)), this protein is Bifunctional enzyme IspD/IspF.